We begin with the raw amino-acid sequence, 719 residues long: Mini-chromosome maintenance complex-binding protein (719 aa).

Positions 152–174 are enriched in low complexity; it reads NNNNNNNNNNNNNNNNNNNNNNN. 3 disordered regions span residues 152–179, 194–236, and 375–416; these read NNNN…NEQI, ADMK…QLTK, and TINN…NNNN. The segment covering 194-211 has biased composition (basic and acidic residues); the sequence is ADMKNENDEENKKSKDQK. 2 stretches are compositionally biased toward low complexity: residues 212 to 221 and 377 to 416; these read STTTTTTTTS and NNNN…NNNN.

The protein belongs to the MCMBP family. In terms of assembly, interacts with the MCM complex.

The protein resides in the nucleus. Functionally, associated component of the MCM complex that acts as a regulator of DNA replication. Binds to the MCM complex during late S phase and may act by promoting the disassembly of the MCM complex from chromatin. The protein is Mini-chromosome maintenance complex-binding protein (mcmbp) of Dictyostelium discoideum (Social amoeba).